A 716-amino-acid polypeptide reads, in one-letter code: Cyclic nucleotide-gated ion channel 1 (716 aa).

Residues 1–97 (MNFRQEKFVR…QGPFLQRWNK (97 aa)) are Cytoplasmic-facing. Residues 98-118 (IFVLACIIAVSLDPLFFYVPI) form a helical membrane-spanning segment. Topologically, residues 119-132 (IDDAKKCLGIDKKM) are extracellular. A helical membrane pass occupies residues 133 to 153 (EITASVLRSFTDVFYVLHIIF). Topologically, residues 154 to 187 (QFRTGFIAPSSRVFGRGVLVEDKREIAKRYLSSH) are cytoplasmic. A helical membrane pass occupies residues 188 to 208 (FIIDILAVLPLPQMVILIIIP). Residues 209-220 (HMRGSSSLNTKN) are Extracellular-facing. The helical transmembrane segment at 221 to 241 (MLKFIVFFQYIPRFIRIYPLY) threads the bilayer. The Cytoplasmic segment spans residues 242-259 (KEVTRTSGILTETAWAGA). Residues 260–280 (AFNLFLYMLASHVFGAFWYLF) traverse the membrane as a helical segment. Over 281 to 379 (SIERETVCWK…GQNLKTSTYI (99 aa)) the chain is Extracellular. The helical transmembrane segment at 380–400 (WEICFAVFISIAGLVLFSFLI) threads the bilayer. Residues 401 to 716 (GNMQTYLQST…PAEPDFNSDD (316 aa)) lie on the Cytoplasmic side of the membrane. Residues 486–610 (MFEK…SKQL) and Glu-557 contribute to the a nucleoside 3',5'-cyclic phosphate site. The calmodulin-binding stretch occupies residues 602-617 (FRRLHSKQLRHTFRYY). The region spanning 622–651 (KTWAACFIQAAWRRYIKKKLEESLKEEENR) is the IQ domain. The segment at 689 to 716 (SVRKPRMPERMPPMLLQKPAEPDFNSDD) is disordered.

This sequence belongs to the cyclic nucleotide-gated cation channel (TC 1.A.1.5) family. Homotetramer or heterotetramer (Potential). Binds calmodulin-2/3/5 with a higher affinity than calmodulin-1/4. In terms of tissue distribution, expressed in the whole plant but only weakly in roots.

Its subcellular location is the cell membrane. Acts as a cyclic nucleotide-gated ion channel. Can be activated by cyclic AMP which leads to an opening of the cation channel. May be responsible for cAMP-induced calcium entry in cells and thus should be involved in the calcium signal transduction. Could transport K(+), Na(+) and Pb(2+). The polypeptide is Cyclic nucleotide-gated ion channel 1 (CNGC1) (Arabidopsis thaliana (Mouse-ear cress)).